The sequence spans 436 residues: MELDDFDPEDKEILSWDINDMKLPQNVKKTDWFQEWPDSYVKHIYSSDDRSAQRHLSSWAMRNTNNHNSRILKKSCLGVVVCSRDCSTEEGRKIYLRPAICDKARQKQQRKSCPNCNGPLKLIPCRGHGGFPVTNFWRHDGRFIFFQSKGEHDHPRPETKLEAEARRAMKKVHMASASSSLRMKGRPEMKGLPGEIPSQGSLPLTWSFQEGVQLPSGYSTPLIANAPQQNSLNDCLSFPKSYDLGGTTELEDPTSTLDPTKLYERYKFSSSKVYSAEDQFQPPVPGVYGDYDEAQTWNKNAVLGRSPTDDTYYPPYPLPVASWPCDYLPSQSSLEHSPQQVPLEPPAAQPGHHPLWTNPGGEPYEEKVPVDFSSYVPSVTYHSPQQDPFLLAYGSHPQQQYALPGKSNRWDFDEEMACMGLDHFNNEMLLNLCSLK.

Residues 14–169 constitute a DNA-binding region (GCM); that stretch reads LSWDINDMKL…KLEAEARRAM (156 aa). Residues cysteine 76, cysteine 82, cysteine 86, cysteine 113, cysteine 116, cysteine 125, histidine 152, and histidine 154 each coordinate Zn(2+).

In terms of processing, polyubiquitinated in the presence of UBE2D2 and FBXW2 (in vitro).

The protein localises to the nucleus. Functionally, transcription factor involved in the control of expression of placental growth factor (PGF) and other placenta-specific genes. Binds to the trophoblast-specific element 2 (TSE2) of the aromatase gene enhancer. Binds to the SYDE1 promoter. Has a central role in mediating the differentiation of trophoblast cells along both the villous and extravillous pathways in placental development. The chain is Chorion-specific transcription factor GCMa (Gcm1) from Rattus norvegicus (Rat).